A 131-amino-acid polypeptide reads, in one-letter code: D-ribose pyranase (131 aa).

The active-site Proton donor is H20. Residues D28, H98, and 120 to 122 (YSN) contribute to the substrate site.

It belongs to the RbsD / FucU family. RbsD subfamily. In terms of assembly, homodecamer.

The protein resides in the cytoplasm. It catalyses the reaction beta-D-ribopyranose = beta-D-ribofuranose. It participates in carbohydrate metabolism; D-ribose degradation; D-ribose 5-phosphate from beta-D-ribopyranose: step 1/2. Catalyzes the interconversion of beta-pyran and beta-furan forms of D-ribose. The chain is D-ribose pyranase from Lactobacillus gasseri (strain ATCC 33323 / DSM 20243 / BCRC 14619 / CIP 102991 / JCM 1131 / KCTC 3163 / NCIMB 11718 / NCTC 13722 / AM63).